Reading from the N-terminus, the 65-residue chain is Peptide ToAcP (65 aa).

The N-terminal stretch at 1–24 (MKMKMIVVISILLIVFSLSSKAMS) is a signal peptide. Residues 25–34 (LEDEQESVQR) constitute a propeptide that is removed on maturation. Residue Ala58 is modified to Alanine amide. A propeptide spanning residues 59-65 (GRFDPAV) is cleaved from the precursor.

In terms of tissue distribution, expressed by the venom gland.

The protein resides in the secreted. Functionally, helical wheel projections predict no hydrophobic face, suggesting a non-amphipathic peptide. Does not show antifungal activity. The polypeptide is Peptide ToAcP (Tityus obscurus (Amazonian scorpion)).